Here is a 494-residue protein sequence, read N- to C-terminus: Probable cytosol aminopeptidase (494 aa).

Positions 260 and 265 each coordinate Mn(2+). Lys272 is an active-site residue. The Mn(2+) site is built by Asp283, Asp342, and Glu344. Arg346 is an active-site residue.

It belongs to the peptidase M17 family. It depends on Mn(2+) as a cofactor.

Its subcellular location is the cytoplasm. The catalysed reaction is Release of an N-terminal amino acid, Xaa-|-Yaa-, in which Xaa is preferably Leu, but may be other amino acids including Pro although not Arg or Lys, and Yaa may be Pro. Amino acid amides and methyl esters are also readily hydrolyzed, but rates on arylamides are exceedingly low.. The enzyme catalyses Release of an N-terminal amino acid, preferentially leucine, but not glutamic or aspartic acids.. Presumably involved in the processing and regular turnover of intracellular proteins. Catalyzes the removal of unsubstituted N-terminal amino acids from various peptides. In Bacillus thuringiensis (strain Al Hakam), this protein is Probable cytosol aminopeptidase.